The sequence spans 477 residues: MTDKAIRTRFAPSPTGMFHVGGARSALFNWALALQQPEGKFVLRIEDTDAARNRPEWTEGILRALSALGIDERDPHFEGPYFQSAYADKHREVAEELYRKGRAYYCDCTREQIQERRGNPHLGYDGYCRDRGLEPGPGRALRFRVPEGGPTVVDDKIRGRVEFDHSAIEDFVIARSDGSPLFVLANVVDDVEMAITHVVRGEEHLSNTPKQQLLWEALGQTPPVWAHLPVIVNEKRQKLSKRRDKVALEDYLAEGYLPEAMVNYLMLLGWGPGDDREIMPFSEMVPLFRLEDVNSSSAFFDEKKLRAFNGEYIRALDTTEFVERCAPWLGSEKAPWPAENFDAQVFEAVAPLAQTRISVLSEIVSYVDFLFLDRPVEDEKSWAKAMKPGVGEEMLTAALERFSDPNLEWRAEPLKAALEEVAAAQGLKLGKAQAPVRVAVTGRTVGLPLFESLELLGRSRVQERLRAALEKLKAAGE.

The 'HIGH' region signature appears at 12-22; the sequence is PSPTGMFHVGG. 4 residues coordinate Zn(2+): Cys-106, Cys-108, Cys-128, and Asp-130. The short motif at 238–242 is the 'KMSKS' region element; the sequence is KLSKR. Lys-241 is an ATP binding site.

This sequence belongs to the class-I aminoacyl-tRNA synthetase family. Glutamate--tRNA ligase type 1 subfamily. Monomer. Zn(2+) is required as a cofactor.

The protein localises to the cytoplasm. It carries out the reaction tRNA(Glu) + L-glutamate + ATP = L-glutamyl-tRNA(Glu) + AMP + diphosphate. Its function is as follows. Catalyzes the attachment of glutamate to tRNA(Glu) in a two-step reaction: glutamate is first activated by ATP to form Glu-AMP and then transferred to the acceptor end of tRNA(Glu). The chain is Glutamate--tRNA ligase from Thermobifida fusca (strain YX).